Reading from the N-terminus, the 313-residue chain is Acetyl-coenzyme A carboxylase carboxyl transferase subunit alpha (313 aa).

The region spanning 36 to 286 (RLDKEVKTIY…KEYFLDTLRT (251 aa)) is the CoA carboxyltransferase C-terminal domain.

The protein belongs to the AccA family. In terms of assembly, acetyl-CoA carboxylase is a heterohexamer composed of biotin carboxyl carrier protein (AccB), biotin carboxylase (AccC) and two subunits each of ACCase subunit alpha (AccA) and ACCase subunit beta (AccD).

The protein localises to the cytoplasm. The enzyme catalyses N(6)-carboxybiotinyl-L-lysyl-[protein] + acetyl-CoA = N(6)-biotinyl-L-lysyl-[protein] + malonyl-CoA. It participates in lipid metabolism; malonyl-CoA biosynthesis; malonyl-CoA from acetyl-CoA: step 1/1. Functionally, component of the acetyl coenzyme A carboxylase (ACC) complex. First, biotin carboxylase catalyzes the carboxylation of biotin on its carrier protein (BCCP) and then the CO(2) group is transferred by the carboxyltransferase to acetyl-CoA to form malonyl-CoA. The polypeptide is Acetyl-coenzyme A carboxylase carboxyl transferase subunit alpha (Helicobacter acinonychis (strain Sheeba)).